The following is a 370-amino-acid chain: Aminomethyltransferase (370 aa).

This sequence belongs to the GcvT family. In terms of assembly, the glycine cleavage system is composed of four proteins: P, T, L and H.

It catalyses the reaction N(6)-[(R)-S(8)-aminomethyldihydrolipoyl]-L-lysyl-[protein] + (6S)-5,6,7,8-tetrahydrofolate = N(6)-[(R)-dihydrolipoyl]-L-lysyl-[protein] + (6R)-5,10-methylene-5,6,7,8-tetrahydrofolate + NH4(+). The glycine cleavage system catalyzes the degradation of glycine. The chain is Aminomethyltransferase from Clostridium botulinum (strain 657 / Type Ba4).